Here is a 447-residue protein sequence, read N- to C-terminus: UDP-N-acetylmuramoylalanine--D-glutamate ligase (447 aa).

112-118 (GTNGKST) is a binding site for ATP.

Belongs to the MurCDEF family.

It localises to the cytoplasm. It carries out the reaction UDP-N-acetyl-alpha-D-muramoyl-L-alanine + D-glutamate + ATP = UDP-N-acetyl-alpha-D-muramoyl-L-alanyl-D-glutamate + ADP + phosphate + H(+). It functions in the pathway cell wall biogenesis; peptidoglycan biosynthesis. Cell wall formation. Catalyzes the addition of glutamate to the nucleotide precursor UDP-N-acetylmuramoyl-L-alanine (UMA). This is UDP-N-acetylmuramoylalanine--D-glutamate ligase from Legionella pneumophila (strain Lens).